The sequence spans 364 residues: Peptide chain release factor 1 (364 aa).

An N5-methylglutamine modification is found at Gln238. A compositionally biased stretch (basic and acidic residues) spans Asp286 to Arg297. The disordered stretch occupies residues Asp286–Tyr315.

Belongs to the prokaryotic/mitochondrial release factor family. In terms of processing, methylated by PrmC. Methylation increases the termination efficiency of RF1.

Its subcellular location is the cytoplasm. In terms of biological role, peptide chain release factor 1 directs the termination of translation in response to the peptide chain termination codons UAG and UAA. The polypeptide is Peptide chain release factor 1 (Idiomarina loihiensis (strain ATCC BAA-735 / DSM 15497 / L2-TR)).